Consider the following 397-residue polypeptide: tRNA-specific 2-thiouridylase MnmA (397 aa).

Residues 19 to 26 (AMSGGVDS) and leucine 45 contribute to the ATP site. Residue cysteine 113 is the Nucleophile of the active site. A disulfide bridge links cysteine 113 with cysteine 210. Glycine 137 is a binding site for ATP. The interaction with tRNA stretch occupies residues 160-162 (RDQ). The active-site Cysteine persulfide intermediate is the cysteine 210.

It belongs to the MnmA/TRMU family.

The protein localises to the cytoplasm. It carries out the reaction S-sulfanyl-L-cysteinyl-[protein] + uridine(34) in tRNA + AH2 + ATP = 2-thiouridine(34) in tRNA + L-cysteinyl-[protein] + A + AMP + diphosphate + H(+). Catalyzes the 2-thiolation of uridine at the wobble position (U34) of tRNA, leading to the formation of s(2)U34. The sequence is that of tRNA-specific 2-thiouridylase MnmA from Bradyrhizobium sp. (strain ORS 278).